A 283-amino-acid chain; its full sequence is CASP-like protein 4A3 (283 aa).

A disordered region spans residues 1-86 (MRSPAKTMPS…VEETPSPIVV (86 aa)). The Cytoplasmic segment spans residues 1 to 135 (MRSPAKTMPS…SRREEVVKFS (135 aa)). Over residues 9-20 (PSMSPSSVSTEK) the composition is skewed to low complexity. The span at 50 to 79 (SLDHSSESEKEDAKSKPESRRNKNPGKVEE) shows a compositional bias: basic and acidic residues. A helical membrane pass occupies residues 136–156 (ALGFRLSEVVLALISFSIMAA). Topologically, residues 157–174 (DKTKGWSGDSFDRYKEYR) are extracellular. The helical transmembrane segment at 175–195 (FCLSVNVVAFVYSSFQACDLA) threads the bilayer. The Cytoplasmic portion of the chain corresponds to 196–212 (YHLVKEKHLISHHLRPL). Residues 213–233 (FEFIIDQVLAYLLMSASTAAV) form a helical membrane-spanning segment. The Extracellular segment spans residues 234-251 (TRVDDWVSNWGKDEFTEM). A helical membrane pass occupies residues 252–272 (ASASIAMSFLAFLAFAFSSLI). Residues 273–283 (SGYNLFNQGSL) lie on the Cytoplasmic side of the membrane.

The protein belongs to the Casparian strip membrane proteins (CASP) family. Homodimer and heterodimers.

It is found in the cell membrane. The polypeptide is CASP-like protein 4A3 (Arabidopsis thaliana (Mouse-ear cress)).